The following is a 180-amino-acid chain: Large ribosomal subunit protein uL6 (180 aa).

Belongs to the universal ribosomal protein uL6 family. As to quaternary structure, part of the 50S ribosomal subunit.

In terms of biological role, this protein binds to the 23S rRNA, and is important in its secondary structure. It is located near the subunit interface in the base of the L7/L12 stalk, and near the tRNA binding site of the peptidyltransferase center. This is Large ribosomal subunit protein uL6 from Thermodesulfovibrio yellowstonii (strain ATCC 51303 / DSM 11347 / YP87).